The sequence spans 601 residues: Alpha-terpineol synthase, chloroplastic (601 aa).

The N-terminal 47 residues, 1–47 (MSTISIHHVGILRNPLHSKSKRASINKPWSLSLPRSSSASRLVEPCR), are a transit peptide targeting the chloroplast. Residues D357 and D361 each contribute to the Mn(2+) site. Residues 357 to 361 (DDVYD) carry the DDXXD motif motif. Homodimerization regions lie at residues 363–369 (YGTLDEL) and 435–471 (EAEW…ELSL). Positions 499 and 507 each coordinate Mn(2+).

The protein belongs to the terpene synthase family. Homodimer. It depends on Mn(2+) as a cofactor. The cofactor is Mg(2+).

It localises to the plastid. The protein resides in the chloroplast. The catalysed reaction is (2E)-geranyl diphosphate + H2O = (S)-alpha-terpineol + diphosphate. The enzyme catalyses (2E)-geranyl diphosphate + H2O = (R)-alpha-terpineol + diphosphate. The protein operates within secondary metabolite biosynthesis; terpenoid biosynthesis. Involved in the biosynthesis of phenolic monoterpenes natural products. Monoterpene synthase which catalyzes the conversion of geranyl diphosphate (GPP) to alpha-terpineol (isomer is not determined). This Thymus caespititius (Cretan thyme) protein is Alpha-terpineol synthase, chloroplastic.